Here is a 336-residue protein sequence, read N- to C-terminus: Dihydroorotate dehydrogenase (quinone) (336 aa).

Residues 62-66 and Thr-86 contribute to the FMN site; that span reads AGLDK. Lys-66 is a substrate binding site. Position 111–115 (111–115) interacts with substrate; it reads NRMGF. FMN is bound by residues Asn-139 and Asn-172. Substrate is bound at residue Asn-172. The Nucleophile role is filled by Ser-175. Position 177 (Asn-177) interacts with substrate. FMN contacts are provided by Lys-217 and Thr-245. 246–247 is a binding site for substrate; it reads NT. Residues Gly-268, Gly-297, and 318-319 each bind FMN; that span reads YS.

Belongs to the dihydroorotate dehydrogenase family. Type 2 subfamily. Monomer. The cofactor is FMN.

Its subcellular location is the cell membrane. It carries out the reaction (S)-dihydroorotate + a quinone = orotate + a quinol. Its pathway is pyrimidine metabolism; UMP biosynthesis via de novo pathway; orotate from (S)-dihydroorotate (quinone route): step 1/1. Its function is as follows. Catalyzes the conversion of dihydroorotate to orotate with quinone as electron acceptor. This is Dihydroorotate dehydrogenase (quinone) from Sodalis glossinidius (strain morsitans).